Reading from the N-terminus, the 663-residue chain is Bifunctional polymyxin resistance protein ArnA (663 aa).

The segment at 1 to 307 (MSSKAVVFAY…ELGLVDGSVL (307 aa)) is formyltransferase ArnAFT. His106 serves as the catalytic Proton donor; for formyltransferase activity. (6R)-10-formyltetrahydrofolate-binding positions include Arg116 and 138-142 (VKRAD). Residues 317 to 663 (RRTRVLILGV…EAMLEIADKK (347 aa)) form a dehydrogenase ArnADH region. NAD(+) contacts are provided by residues Asp350 and 371–372 (DI). UDP-alpha-D-glucuronate contacts are provided by residues Ala396, Tyr401, and 435 to 436 (TS). The active-site Proton acceptor; for decarboxylase activity is the Glu437. Residues Arg463, Asn494, 528–537 (RLFDGGEQKR), and Tyr615 each bind UDP-alpha-D-glucuronate. Arg621 serves as the catalytic Proton donor; for decarboxylase activity.

This sequence in the N-terminal section; belongs to the Fmt family. UDP-L-Ara4N formyltransferase subfamily. In the C-terminal section; belongs to the NAD(P)-dependent epimerase/dehydratase family. UDP-glucuronic acid decarboxylase subfamily. As to quaternary structure, homohexamer, formed by a dimer of trimers.

It catalyses the reaction UDP-alpha-D-glucuronate + NAD(+) = UDP-beta-L-threo-pentopyranos-4-ulose + CO2 + NADH. The catalysed reaction is UDP-4-amino-4-deoxy-beta-L-arabinose + (6R)-10-formyltetrahydrofolate = UDP-4-deoxy-4-formamido-beta-L-arabinose + (6S)-5,6,7,8-tetrahydrofolate + H(+). Its pathway is nucleotide-sugar biosynthesis; UDP-4-deoxy-4-formamido-beta-L-arabinose biosynthesis; UDP-4-deoxy-4-formamido-beta-L-arabinose from UDP-alpha-D-glucuronate: step 1/3. It functions in the pathway nucleotide-sugar biosynthesis; UDP-4-deoxy-4-formamido-beta-L-arabinose biosynthesis; UDP-4-deoxy-4-formamido-beta-L-arabinose from UDP-alpha-D-glucuronate: step 3/3. The protein operates within bacterial outer membrane biogenesis; lipopolysaccharide biosynthesis. In terms of biological role, bifunctional enzyme that catalyzes the oxidative decarboxylation of UDP-glucuronic acid (UDP-GlcUA) to UDP-4-keto-arabinose (UDP-Ara4O) and the addition of a formyl group to UDP-4-amino-4-deoxy-L-arabinose (UDP-L-Ara4N) to form UDP-L-4-formamido-arabinose (UDP-L-Ara4FN). The modified arabinose is attached to lipid A and is required for resistance to polymyxin and cationic antimicrobial peptides. This chain is Bifunctional polymyxin resistance protein ArnA, found in Pseudomonas fluorescens (strain SBW25).